A 155-amino-acid polypeptide reads, in one-letter code: Interleukin-2 (155 aa).

The N-terminal stretch at 1-20 (MYRMQLLSCIALTLALVANG) is a signal peptide. Thr23 carries O-linked (GalNAc...) threonine glycosylation. A disulfide bridge connects residues Cys79 and Cys127.

The protein belongs to the IL-2 family.

It localises to the secreted. Cytokine produced by activated CD4-positive helper T-cells and to a lesser extend activated CD8-positive T-cells and natural killer (NK) cells that plays pivotal roles in the immune response and tolerance. Binds to a receptor complex composed of either the high-affinity trimeric IL-2R (IL2RA/CD25, IL2RB/CD122 and IL2RG/CD132) or the low-affinity dimeric IL-2R (IL2RB and IL2RG). Interaction with the receptor leads to oligomerization and conformation changes in the IL-2R subunits resulting in downstream signaling starting with phosphorylation of JAK1 and JAK3. In turn, JAK1 and JAK3 phosphorylate the receptor to form a docking site leading to the phosphorylation of several substrates including STAT5. This process leads to activation of several pathways including STAT, phosphoinositide-3-kinase/PI3K and mitogen-activated protein kinase/MAPK pathways. Functions as a T-cell growth factor and can increase NK-cell cytolytic activity as well. Promotes strong proliferation of activated B-cells and subsequently immunoglobulin production. Plays a pivotal role in regulating the adaptive immune system by controlling the survival and proliferation of regulatory T-cells, which are required for the maintenance of immune tolerance. Moreover, participates in the differentiation and homeostasis of effector T-cell subsets, including Th1, Th2, Th17 as well as memory CD8-positive T-cells. The sequence is that of Interleukin-2 (IL2) from Capra hircus (Goat).